The following is a 279-amino-acid chain: Biotin synthase (279 aa).

The Radical SAM core domain maps to 2 to 228 (KTIMLCAICS…ETRVMIAGGR (227 aa)). Positions 17, 21, and 24 each coordinate [4Fe-4S] cluster. [2Fe-2S] cluster contacts are provided by Cys61, Cys96, Cys154, and Arg221.

Belongs to the radical SAM superfamily. Biotin synthase family. As to quaternary structure, homodimer. It depends on [4Fe-4S] cluster as a cofactor. [2Fe-2S] cluster is required as a cofactor.

The enzyme catalyses (4R,5S)-dethiobiotin + (sulfur carrier)-SH + 2 reduced [2Fe-2S]-[ferredoxin] + 2 S-adenosyl-L-methionine = (sulfur carrier)-H + biotin + 2 5'-deoxyadenosine + 2 L-methionine + 2 oxidized [2Fe-2S]-[ferredoxin]. Its pathway is cofactor biosynthesis; biotin biosynthesis; biotin from 7,8-diaminononanoate: step 2/2. Catalyzes the conversion of dethiobiotin (DTB) to biotin by the insertion of a sulfur atom into dethiobiotin via a radical-based mechanism. This Campylobacter concisus (strain 13826) protein is Biotin synthase.